The sequence spans 313 residues: Biotin synthase (313 aa).

In terms of domain architecture, Radical SAM core spans 28-258 (NFGNDIELCS…LFPQARLRLS (231 aa)). Residues C46, C50, and C53 each contribute to the [4Fe-4S] cluster site. C90, C121, C181, and R256 together coordinate [2Fe-2S] cluster.

It belongs to the radical SAM superfamily. Biotin synthase family. Homodimer. [4Fe-4S] cluster is required as a cofactor. [2Fe-2S] cluster serves as cofactor.

It carries out the reaction (4R,5S)-dethiobiotin + (sulfur carrier)-SH + 2 reduced [2Fe-2S]-[ferredoxin] + 2 S-adenosyl-L-methionine = (sulfur carrier)-H + biotin + 2 5'-deoxyadenosine + 2 L-methionine + 2 oxidized [2Fe-2S]-[ferredoxin]. It participates in cofactor biosynthesis; biotin biosynthesis; biotin from 7,8-diaminononanoate: step 2/2. Its function is as follows. Catalyzes the conversion of dethiobiotin (DTB) to biotin by the insertion of a sulfur atom into dethiobiotin via a radical-based mechanism. The polypeptide is Biotin synthase (Francisella tularensis subsp. tularensis (strain WY96-3418)).